Consider the following 1499-residue polypeptide: DNA-directed RNA polymerase subunit beta' (1499 aa).

Zn(2+) contacts are provided by cysteine 67, cysteine 69, cysteine 82, and cysteine 85. Mg(2+) contacts are provided by aspartate 499, aspartate 501, and aspartate 503. Residues cysteine 867, cysteine 943, cysteine 950, and cysteine 953 each contribute to the Zn(2+) site.

The protein belongs to the RNA polymerase beta' chain family. As to quaternary structure, the RNAP catalytic core consists of 2 alpha, 1 beta, 1 beta' and 1 omega subunit. When a sigma factor is associated with the core the holoenzyme is formed, which can initiate transcription. Mg(2+) is required as a cofactor. The cofactor is Zn(2+).

The catalysed reaction is RNA(n) + a ribonucleoside 5'-triphosphate = RNA(n+1) + diphosphate. DNA-dependent RNA polymerase catalyzes the transcription of DNA into RNA using the four ribonucleoside triphosphates as substrates. This is DNA-directed RNA polymerase subunit beta' from Prosthecochloris aestuarii (strain DSM 271 / SK 413).